The primary structure comprises 248 residues: Large ribosomal subunit protein uL4 (248 aa).

Disordered regions lie at residues 48 to 95 (GTHK…GPVP) and 210 to 248 (AFSE…RTGA). Residues 233–248 (DATKARSSRHDDRTGA) are compositionally biased toward basic and acidic residues.

This sequence belongs to the universal ribosomal protein uL4 family. In terms of assembly, part of the 50S ribosomal subunit.

One of the primary rRNA binding proteins, this protein initially binds near the 5'-end of the 23S rRNA. It is important during the early stages of 50S assembly. It makes multiple contacts with different domains of the 23S rRNA in the assembled 50S subunit and ribosome. In terms of biological role, forms part of the polypeptide exit tunnel. The polypeptide is Large ribosomal subunit protein uL4 (Tropheryma whipplei (strain TW08/27) (Whipple's bacillus)).